The sequence spans 570 residues: Protein NRT1/ PTR FAMILY 8.1 (570 aa).

Thr98 is subject to Phosphothreonine. Helical transmembrane passes span 99 to 119, 140 to 160, 182 to 202, 210 to 230, 329 to 349, 377 to 397, 414 to 434, 454 to 474, 494 to 514, and 537 to 557; these read IATFVFIYVSGMTLLTLSASV, AVFFVALYMIALGTGGIKPCV, FFNWFYFSINVGALIAATVLV, WGWGFGVPTVAMVIAVCFFFF, IITLLPVWATGIVFATVYSQM, LFDTVSVLFWTPVYDQFIIPL, MGIGLVVSIFAMITAGVLEVV, IFWQIPQYLLIGCAEVFTFIG, LSLTTVALGNYLSTVLVTVVM, and YFFYLLATLSFLNFLVYLWIS.

The protein belongs to the major facilitator superfamily. Proton-dependent oligopeptide transporter (POT/PTR) (TC 2.A.17) family. Expressed in cotyledons, hypocotyls, leaves, roots, flowers, pistils and vascular tissue of sepals, anthers, carpels and funiculi. Not detected in seeds.

It localises to the cell membrane. Functionally, peptide transporter. Mediates the transport of di- and tripeptides. High affinity transporter with low selectivity. No transport of amino acids. This chain is Protein NRT1/ PTR FAMILY 8.1 (NPF8.1), found in Arabidopsis thaliana (Mouse-ear cress).